A 90-amino-acid polypeptide reads, in one-letter code: Small ribosomal subunit protein bS16 (90 aa).

This sequence belongs to the bacterial ribosomal protein bS16 family.

In Streptococcus pyogenes serotype M4 (strain MGAS10750), this protein is Small ribosomal subunit protein bS16.